Consider the following 181-residue polypeptide: Adenylyl-sulfate kinase (181 aa).

An ATP-binding site is contributed by 12-19 (GLSGAGKS). Ser-86 (phosphoserine intermediate) is an active-site residue.

Belongs to the APS kinase family.

The catalysed reaction is adenosine 5'-phosphosulfate + ATP = 3'-phosphoadenylyl sulfate + ADP + H(+). It functions in the pathway sulfur metabolism; hydrogen sulfide biosynthesis; sulfite from sulfate: step 2/3. Functionally, catalyzes the synthesis of activated sulfate. This Microcystis aeruginosa (strain NIES-843 / IAM M-2473) protein is Adenylyl-sulfate kinase.